The sequence spans 716 residues: Translation initiation factor IF-2 (716 aa).

The segment at 50-137 (FKKSAKPAGN…KPKKELPEKI (88 aa)) is disordered. Residues 92 to 101 (NNVQNTQFNN) are compositionally biased toward low complexity. Over residues 102–118 (KNKKKNNNNKKNKRGKN) the composition is skewed to basic residues. Over residues 125-137 (KQFKPKKELPEKI) the composition is skewed to basic and acidic residues. The tr-type G domain maps to 217 to 386 (IRPPVVTIMG…LLVSEVEELK (170 aa)). A G1 region spans residues 226 to 233 (GHVDHGKT). GTP is bound at residue 226-233 (GHVDHGKT). The G2 stretch occupies residues 251-255 (GITQH). A G3 region spans residues 272-275 (DTPG). Residues 272 to 276 (DTPGH) and 326 to 329 (NKID) contribute to the GTP site. A G4 region spans residues 326 to 329 (NKID). The segment at 362–364 (SAL) is G5.

The protein belongs to the TRAFAC class translation factor GTPase superfamily. Classic translation factor GTPase family. IF-2 subfamily.

The protein localises to the cytoplasm. One of the essential components for the initiation of protein synthesis. Protects formylmethionyl-tRNA from spontaneous hydrolysis and promotes its binding to the 30S ribosomal subunits. Also involved in the hydrolysis of GTP during the formation of the 70S ribosomal complex. This Bacillus licheniformis (strain ATCC 14580 / DSM 13 / JCM 2505 / CCUG 7422 / NBRC 12200 / NCIMB 9375 / NCTC 10341 / NRRL NRS-1264 / Gibson 46) protein is Translation initiation factor IF-2.